A 206-amino-acid chain; its full sequence is 2,3-bisphosphoglycerate-dependent phosphoglycerate mutase (206 aa).

Residues 9–16 (RHGQSEWN), 22–23 (TG), R61, 88–91 (ERDY), K99, 115–116 (RR), and 159–160 (GN) contribute to the substrate site. H10 functions as the Tele-phosphohistidine intermediate in the catalytic mechanism. Residue E88 is the Proton donor/acceptor of the active site.

It belongs to the phosphoglycerate mutase family. BPG-dependent PGAM subfamily. As to quaternary structure, homodimer.

It carries out the reaction (2R)-2-phosphoglycerate = (2R)-3-phosphoglycerate. It functions in the pathway carbohydrate degradation; glycolysis; pyruvate from D-glyceraldehyde 3-phosphate: step 3/5. Functionally, catalyzes the interconversion of 2-phosphoglycerate and 3-phosphoglycerate. The protein is 2,3-bisphosphoglycerate-dependent phosphoglycerate mutase of Chelativorans sp. (strain BNC1).